We begin with the raw amino-acid sequence, 173 residues long: Crossover junction endodeoxyribonuclease RuvC (173 aa).

Active-site residues include Asp8, Glu67, and Asp139. Mg(2+)-binding residues include Asp8, Glu67, and Asp139.

The protein belongs to the RuvC family. Homodimer which binds Holliday junction (HJ) DNA. The HJ becomes 2-fold symmetrical on binding to RuvC with unstacked arms; it has a different conformation from HJ DNA in complex with RuvA. In the full resolvosome a probable DNA-RuvA(4)-RuvB(12)-RuvC(2) complex forms which resolves the HJ. Mg(2+) serves as cofactor.

It localises to the cytoplasm. The enzyme catalyses Endonucleolytic cleavage at a junction such as a reciprocal single-stranded crossover between two homologous DNA duplexes (Holliday junction).. The RuvA-RuvB-RuvC complex processes Holliday junction (HJ) DNA during genetic recombination and DNA repair. Endonuclease that resolves HJ intermediates. Cleaves cruciform DNA by making single-stranded nicks across the HJ at symmetrical positions within the homologous arms, yielding a 5'-phosphate and a 3'-hydroxyl group; requires a central core of homology in the junction. The consensus cleavage sequence is 5'-(A/T)TT(C/G)-3'. Cleavage occurs on the 3'-side of the TT dinucleotide at the point of strand exchange. HJ branch migration catalyzed by RuvA-RuvB allows RuvC to scan DNA until it finds its consensus sequence, where it cleaves and resolves the cruciform DNA. The polypeptide is Crossover junction endodeoxyribonuclease RuvC (Serratia proteamaculans (strain 568)).